The sequence spans 331 residues: Probable transcriptional regulatory protein At2g25830 (331 aa).

The protein belongs to the TACO1 family.

In Arabidopsis thaliana (Mouse-ear cress), this protein is Probable transcriptional regulatory protein At2g25830.